The following is a 346-amino-acid chain: tRNA (guanine-N(7)-)-methyltransferase (346 aa).

Residues glycine 101 and 124-125 (EI) contribute to the S-adenosyl-L-methionine site. Positions 149-191 (LKSAGGGGSDAAPESPAAPPTPSEAASPDSTTPSEQQAPTTLV) are disordered. Low complexity predominate over residues 171-182 (SEAASPDSTTPS). S-adenosyl-L-methionine contacts are provided by residues 204-205 (NT) and cysteine 224. Aspartate 227 is a catalytic residue. S-adenosyl-L-methionine is bound at residue 318–320 (TEE).

The protein belongs to the class I-like SAM-binding methyltransferase superfamily. TrmB family. In terms of assembly, forms a complex with trm82.

It localises to the nucleus. It catalyses the reaction guanosine(46) in tRNA + S-adenosyl-L-methionine = N(7)-methylguanosine(46) in tRNA + S-adenosyl-L-homocysteine. It participates in tRNA modification; N(7)-methylguanine-tRNA biosynthesis. Its function is as follows. Catalyzes the formation of N(7)-methylguanine at position 46 (m7G46) in tRNA. This Aspergillus terreus (strain NIH 2624 / FGSC A1156) protein is tRNA (guanine-N(7)-)-methyltransferase (trm8).